The following is a 505-amino-acid chain: Flagellin (505 aa).

Belongs to the bacterial flagellin family.

It localises to the secreted. The protein resides in the bacterial flagellum. Functionally, flagellin is the subunit protein which polymerizes to form the filaments of bacterial flagella. The polypeptide is Flagellin (fliC) (Salmonella montevideo).